The following is a 469-amino-acid chain: Trigger factor (469 aa).

One can recognise a PPIase FKBP-type domain in the interval 162-243 (GDFVSIDLSA…VKSVKERELP (82 aa)). The disordered stretch occupies residues 429 to 469 (NTIDTSEFFGKHAQSDKADQKTEEADPNSDAIDEEVDEAAE). Basic and acidic residues predominate over residues 437-452 (FGKHAQSDKADQKTEE). Residues 453-469 (ADPNSDAIDEEVDEAAE) show a composition bias toward acidic residues.

This sequence belongs to the FKBP-type PPIase family. Tig subfamily.

It localises to the cytoplasm. The catalysed reaction is [protein]-peptidylproline (omega=180) = [protein]-peptidylproline (omega=0). Involved in protein export. Acts as a chaperone by maintaining the newly synthesized protein in an open conformation. Functions as a peptidyl-prolyl cis-trans isomerase. The sequence is that of Trigger factor from Mycobacterium leprae (strain Br4923).